Here is a 588-residue protein sequence, read N- to C-terminus: MRKEAIYHRPADNFAYAYDSETLHLRLRTKKDDIDRVELLHGDPYDWQNGAWQFQMMPMRKTGSDELFDYWFAEVKPPYRRLRYGFVLYSGEEKLVYTEKGFYFEVPTDDTAYYFCFPFLHRVDLFEAPDWVKDTVWYQIFPERFANGNPSISPEGSRPWGSEDPTPTSFFGGDLQGIIDHLDYLVDLGITGIYLTPIFRSPSNHKYDTADYFEVDPHFGDKETLKTLIDRCHEKGIRVMLDAVFNHCGYEFAPFQDVWKNGESSKYKDWFHIHEFPLQTEPRPNYDTFRFVPQMPKLNTANPEVKRYLLDVATYWIREFDIDGWRLDVANEIDHEFWREFRQEVKALKPDVYILGEIWHDAMPWLRGDQFDAVMNYPFTDGVLRFFAKEEISARQFANQMMHVLHSYPNNVNEAAFNLLGSHDTSRILTVCGGDIRKVKLLFLFQLTFTGSPCIYYGDEIGMTGGNDPECRKCMVWDPMQQNKELHQHVKQLIALRKQYRSLRRGEISFLHADDEMNYLIYKKTDGDETVLVIINRSDQKADIPIPLDARGTWLVNLLTGERFAAEAETLCTSLPPYGFVLYAIEHW.

Residues N147, N149, S153, G172, and D174 each contribute to the Ca(2+) site. H247 and R326 together coordinate substrate. The active-site Nucleophile is the D328. E357 functions as the Proton donor in the catalytic mechanism. Residues H423–D424, D468, and R472 each bind substrate.

This sequence belongs to the glycosyl hydrolase 13 family. As to quaternary structure, homodimer. Requires Ca(2+) as cofactor.

It catalyses the reaction Hydrolysis of pullulan to panose (6-alpha-D-glucosylmaltose).. Its function is as follows. Hydrolyzes pullulan efficiently but only a small amount of starch. Endohydrolysis of 1,4-alpha-glucosidic linkages in pullulan to form panose. Also cleaves (1-6)-alpha-glucosidic linkages to form maltotriose. In Geobacillus stearothermophilus (Bacillus stearothermophilus), this protein is Neopullulanase (nplT).